Reading from the N-terminus, the 1092-residue chain is MINKKNNLLTKKKPIANKSNKYAIRKFTVGTASIVIGATLLFGLGHNEAKAEENSVQDVKDSNTDDELSDSNDQSSDEEKNDVINNNQSINTDDNNQIIKKEETNNYDGIEKRSEDRTESTTNVDENEATFLQKTPQDNTHLTEEEVKESSSVESSNSSIDTAQQPSHTTINREESVQTSDNVEDSHVSDFANSKIKESNTESGKEENTIEQPNKVKEDSTTSQPSGYTNIDEKISNQDELLNLPINEYENKARPLSTTSAQPSIKRVTVNQLAAEQGSNVNHLIKVTDQSITEGYDDSEGVIKAHDAENLIYDVTFEVDDKVKSGDTMTVDIDKNTVPSDLTDSFTIPKIKDNSGEIIATGTYDNKNKQITYTFTDYVDKYENIKAHLKLTSYIDKSKVPNNNTKLDVEYKTALSSVNKTITVEYQRPNENRTANLQSMFTNIDTKNHTVEQTIYINPLRYSAKETNVNISGNGDEGSTIIDDSTIIKVYKVGDNQNLPDSNRIYDYSEYEDVTNDDYAQLGNNNDVNINFGNIDSPYIIKVISKYDPNKDDYTTIQQTVTMQTTINEYTGEFRTASYDNTIAFSTSSGQGQGDLPPEKTYKIGDYVWEDVDKDGIQNTNDNEKPLSNVLVTLTYPDGTSKSVRTDEDGKYQFDGLKNGLTYKITFETPEGYTPTLKHSGTNPALDSEGNSVWVTINGQDDMTIDSGFYQTPKYSLGNYVWYDTNKDGIQGDDEKGISGVKVTLKDENGNIISTTTTDENGKYQFDNLNSGNYIVHFDKPSGMTQTTTDSGDDDEQDADGEEVHVTITDHDDFSIDNGYYDDESDSDSDSDSDSDSDSDSDSDSDSDSDSDSDSDSDSDSDSDSDSDSDSDSDSDSDSDSDSDSDSDSDSDSDSDSDSDSDSDSDSDSDSDSDSDSDSDSDSDSDSDSDSDSDSDSDSDSDSDSDSDSDSDSDSDSDSDSDSDSDSDSDSDSDSDSDSDSDSDSDSDSDSDSDSDSDSDSDSDSDSDSDSVSDSDSDSDSDSGSDSDSDSDSDSDNDSDLGNSSDKSTKDKLPDTGANEDYGSKGTLLGTLFAGLGALLLGKRRKNRKNKN.

Positions 1 to 51 are cleaved as a signal peptide; that stretch reads MINKKNNLLTKKKPIANKSNKYAIRKFTVGTASIVIGATLLFGLGHNEAKA. The segment covering 50-63 has biased composition (basic and acidic residues); it reads KAEENSVQDVKDSN. A disordered region spans residues 50-236; sequence KAEENSVQDV…GYTNIDEKIS (187 aa). The segment at 52 to 599 is ligand binding A region; sequence EENSVQDVKD…GQGQGDLPPE (548 aa). Acidic residues predominate over residues 64 to 76; it reads TDDELSDSNDQSS. Residues 84-98 are compositionally biased toward low complexity; sequence INNNQSINTDDNNQI. Over residues 99–119 the composition is skewed to basic and acidic residues; the sequence is IKKEETNNYDGIEKRSEDRTE. The span at 120–140 shows a compositional bias: polar residues; the sequence is STTNVDENEATFLQKTPQDNT. Residues 141-151 are compositionally biased toward basic and acidic residues; that stretch reads HLTEEEVKESS. A compositionally biased stretch (polar residues) spans 160 to 170; that stretch reads IDTAQQPSHTT. The span at 195–220 shows a compositional bias: basic and acidic residues; the sequence is KIKESNTESGKEENTIEQPNKVKEDS. Residues E294, S299, V302, and E309 each contribute to the Ca(2+) site. The interval 579–590 is interaction with human fibrinogen; sequence YDNTIAFSTSSG. CNA-B domains follow at residues 600–713 and 714–824; these read KTYK…YQTP and KYSL…YDDE. The disordered stretch occupies residues 780–1068; that stretch reads KPSGMTQTTT…NEDYGSKGTL (289 aa). A compositionally biased stretch (acidic residues) spans 791–801; it reads SGDDDEQDADG. Over residues 802–814 the composition is skewed to basic and acidic residues; sequence EEVHVTITDHDDF. Positions 820-1039 are enriched in acidic residues; that stretch reads YYDDESDSDS…DSDSDSDNDS (220 aa). The short motif at 1053 to 1057 is the LPXTG sorting signal element; it reads LPDTG. T1056 is modified (pentaglycyl murein peptidoglycan amidated threonine). The propeptide at 1057-1092 is removed by sortase; that stretch reads GANEDYGSKGTLLGTLFAGLGALLLGKRRKNRKNKN.

The protein belongs to the serine-aspartate repeat-containing protein (SDr) family.

The protein localises to the secreted. Its subcellular location is the cell wall. Functionally, promotes bacterial attachment to both soluble and immobilized forms of fibrinogen in a dose-dependent manner. This binding occurs through the beta-chain of human fibrinogen. Could contribute to the initiation of foreign-body infection by allowing bacteria to adhere to biomaterial surfaces that have become coated with host proteins after implantation. Is important in the pathogenesis of central venous catheter (CVC)-associated infection model. In Staphylococcus epidermidis, this protein is Fibrinogen-binding protein (fbe).